The chain runs to 173 residues: 16S rRNA aminocarboxypropyltransferase (173 aa).

The S-adenosyl-L-methionine site is built by T25, L72, L96, and S115.

The protein belongs to the TDD superfamily. TSR3 family.

The protein localises to the cytoplasm. The enzyme catalyses an N(1)-methylpseudouridine in rRNA + S-adenosyl-L-methionine = N(1)-methyl-N(3)-[(3S)-3-amino-3-carboxypropyl]pseudouridine in rRNA + S-methyl-5'-thioadenosine + H(+). In terms of biological role, aminocarboxypropyltransferase that catalyzes the aminocarboxypropyl transfer on pseudouridine corresponding to position 914 in M.jannaschii 16S rRNA. It constitutes the last step in biosynthesis of the hypermodified N1-methyl-N3-(3-amino-3-carboxypropyl) pseudouridine (m1acp3-Psi). The sequence is that of 16S rRNA aminocarboxypropyltransferase from Methanosarcina mazei (strain ATCC BAA-159 / DSM 3647 / Goe1 / Go1 / JCM 11833 / OCM 88) (Methanosarcina frisia).